A 123-amino-acid polypeptide reads, in one-letter code: Histone H2B (123 aa).

The segment at 1-31 (MPPKTSGKAAKKAGKAQKNITKNDKKKKRKR) is disordered. An N-methylproline; partial modification is found at proline 2. Lysine 44 is subject to N6-succinyllysine. Serine 110 carries O-linked (GlcNAc) serine glycosylation. 2 positions are modified to N6-succinyllysine: lysine 114 and lysine 118. Residue lysine 118 forms a Glycyl lysine isopeptide (Lys-Gly) (interchain with G-Cter in ubiquitin) linkage.

The protein belongs to the histone H2B family. The nucleosome is a histone octamer containing two molecules each of H2A, H2B, H3 and H4 assembled in one H3-H4 heterotetramer and two H2A-H2B heterodimers. The octamer wraps approximately 147 bp of DNA. Phosphorylated by the catalytic component of the Dbf4-dependent kinase (DDK) complex Cdc7. In terms of processing, monoubiquitination of Lys-118 by Bre1 gives a specific tag for epigenetic transcriptional activation and is also prerequisite for histone H3 'Lys-4' and 'Lys-79' methylation. Deubiquitination of Lys-118 by the SAGA complex is involved in activating transcription of a large subset of genes. Post-translationally, methylation at Pro-2 increases upon heat shock. GlcNAcylation at Ser-110 promotes monoubiquitination of Lys-118. It fluctuates in response to extracellular glucose, and associates with transcribed genes.

It localises to the nucleus. Its subcellular location is the chromosome. In terms of biological role, core component of nucleosome. Nucleosomes wrap and compact DNA into chromatin, limiting DNA accessibility to the cellular machineries which require DNA as a template. Histones thereby play a central role in transcription regulation, DNA repair, DNA replication and chromosomal stability. DNA accessibility is regulated via a complex set of post-translational modifications of histones, also called histone code, and nucleosome remodeling. The protein is Histone H2B (His2B) of Drosophila sechellia (Fruit fly).